Here is a 325-residue protein sequence, read N- to C-terminus: UDP-N-acetylenolpyruvoylglucosamine reductase (325 aa).

In terms of domain architecture, FAD-binding PCMH-type spans 40 to 221; that stretch reads RTGGLAELFY…RAAMDEVALH (182 aa). Arginine 186 is a catalytic residue. The Proton donor role is filled by serine 235. Glutamate 305 is an active-site residue.

This sequence belongs to the MurB family. It depends on FAD as a cofactor.

It localises to the cytoplasm. The catalysed reaction is UDP-N-acetyl-alpha-D-muramate + NADP(+) = UDP-N-acetyl-3-O-(1-carboxyvinyl)-alpha-D-glucosamine + NADPH + H(+). It participates in cell wall biogenesis; peptidoglycan biosynthesis. Cell wall formation. This chain is UDP-N-acetylenolpyruvoylglucosamine reductase, found in Bartonella henselae (strain ATCC 49882 / DSM 28221 / CCUG 30454 / Houston 1) (Rochalimaea henselae).